The sequence spans 532 residues: Protein PTST homolog 2, chloroplastic (532 aa).

The transit peptide at Met1–Arg71 directs the protein to the chloroplast. 4 disordered regions span residues Gln165–Asp201, Glu256–Trp292, Ser314–Asn347, and His367–Asn388. Residues Glu173 to Leu183 are compositionally biased toward basic and acidic residues. Basic and acidic residues predominate over residues Val320–Ile339. Residues Leu389 to Thr454 are a coiled coil.

In terms of assembly, interacts with PTST3 and SS4. Interacts with MFP1; the interaction is essential for the initiation of starch granules biosynthesis in leaf chloroplasts, for the correct location of the process in the stromal spaces between the thylakoid membranes, and for the association of this protein with the thylakoid membranes. Interacts with PII1/MRC; the interaction is essential for the initiation of starch granules biosynthesis in leaf chloroplasts.

The protein localises to the plastid. Its subcellular location is the chloroplast. The protein resides in the chloroplast thylakoid membrane. In terms of biological role, involved in starch granule initiation in leaf chloroplasts. Binds and delivers suitable maltooligosaccharide substrates to starch synthase 4 (SS4). The polypeptide is Protein PTST homolog 2, chloroplastic (Arabidopsis thaliana (Mouse-ear cress)).